A 435-amino-acid polypeptide reads, in one-letter code: Gamma-glutamyl phosphate reductase (435 aa).

The protein belongs to the gamma-glutamyl phosphate reductase family.

It is found in the cytoplasm. It carries out the reaction L-glutamate 5-semialdehyde + phosphate + NADP(+) = L-glutamyl 5-phosphate + NADPH + H(+). Its pathway is amino-acid biosynthesis; L-proline biosynthesis; L-glutamate 5-semialdehyde from L-glutamate: step 2/2. Functionally, catalyzes the NADPH-dependent reduction of L-glutamate 5-phosphate into L-glutamate 5-semialdehyde and phosphate. The product spontaneously undergoes cyclization to form 1-pyrroline-5-carboxylate. In Aquifex aeolicus (strain VF5), this protein is Gamma-glutamyl phosphate reductase.